The following is a 228-amino-acid chain: UPF0173 metal-dependent hydrolase Dred_1740 (228 aa).

It belongs to the UPF0173 family.

This is UPF0173 metal-dependent hydrolase Dred_1740 from Desulforamulus reducens (strain ATCC BAA-1160 / DSM 100696 / MI-1) (Desulfotomaculum reducens).